The chain runs to 292 residues: Inositol monophosphatase 2 (292 aa).

Residues Glu75, Asp94, Ile96, Asp97, and Asp231 each coordinate Mg(2+). Residue Glu75 coordinates substrate. Substrate contacts are provided by residues 96-99 (IDGT) and Asp231.

It belongs to the inositol monophosphatase superfamily. Mg(2+) serves as cofactor.

It catalyses the reaction a myo-inositol phosphate + H2O = myo-inositol + phosphate. The protein operates within polyol metabolism; myo-inositol biosynthesis; myo-inositol from D-glucose 6-phosphate: step 2/2. Inhibited by Li(+) and Na(+). Responsible for the provision of inositol required for synthesis of phosphatidylinositol and polyphosphoinositides and involved in the inositol cycle of calcium signaling. This chain is Inositol monophosphatase 2 (INM2), found in Saccharomyces cerevisiae (strain ATCC 204508 / S288c) (Baker's yeast).